The following is an 83-amino-acid chain: Small ribosomal subunit protein bS16 (83 aa).

Belongs to the bacterial ribosomal protein bS16 family.

This Albidiferax ferrireducens (strain ATCC BAA-621 / DSM 15236 / T118) (Rhodoferax ferrireducens) protein is Small ribosomal subunit protein bS16.